The sequence spans 93 residues: Cell division topological specificity factor (93 aa).

Belongs to the MinE family.

Functionally, prevents the cell division inhibition by proteins MinC and MinD at internal division sites while permitting inhibition at polar sites. This ensures cell division at the proper site by restricting the formation of a division septum at the midpoint of the long axis of the cell. The protein is Cell division topological specificity factor of Syntrophus aciditrophicus (strain SB).